Here is an 88-residue protein sequence, read N- to C-terminus: MSEKQAHTRVIQGKVISQAGNKSIVILVERKVVHSKYRKIVKRFKKYTIHDENQSAKIGDVVSAIECKPISKTKAFRFKEIITAGVEL.

Belongs to the universal ribosomal protein uS17 family. In terms of assembly, part of the 30S ribosomal subunit.

One of the primary rRNA binding proteins, it binds specifically to the 5'-end of 16S ribosomal RNA. The protein is Small ribosomal subunit protein uS17 of Helicobacter hepaticus (strain ATCC 51449 / 3B1).